A 39-amino-acid chain; its full sequence is Photosystem II reaction center protein Y (39 aa).

The chain crosses the membrane as a helical span at residues 4–22 (TLVVFAPIIAALAWVIFNI).

The protein belongs to the PsbY family. As to quaternary structure, PSII is composed of 1 copy each of membrane proteins PsbA, PsbB, PsbC, PsbD, PsbE, PsbF, PsbH, PsbI, PsbJ, PsbK, PsbL, PsbM, PsbT, PsbX, PsbY, Psb30/Ycf12, peripheral proteins PsbO, CyanoQ (PsbQ), PsbU, PsbV and a large number of cofactors. It forms dimeric complexes.

It is found in the cellular thylakoid membrane. In terms of biological role, loosely associated component of the core of photosystem II (PSII), it is not always seen in crystals. PSII is a light-driven water plastoquinone oxidoreductase, using light energy to abstract electrons from H(2)O, generating a proton gradient subsequently used for ATP formation. The protein is Photosystem II reaction center protein Y of Prochlorococcus marinus (strain MIT 9515).